Here is a 442-residue protein sequence, read N- to C-terminus: Putative protein YjbI (442 aa).

The protein is Putative protein YjbI (yjbI) of Escherichia coli (strain K12).